Consider the following 142-residue polypeptide: MVITLVGEKLAKPGLEFIYYGPGEPCKTCRLARVCIGNLEPGRRYKVIKVRNIEHPCPLHEGKVRVVEVVEPAIEVLMEPRYAIAGSKLTLRFVDCNDPEKLDLVRPEGLFEGDTVKIIEILGDVECNGRKFKLVKVMREKE.

The protein belongs to the UPF0179 family.

The chain is UPF0179 protein PYRAB06360 from Pyrococcus abyssi (strain GE5 / Orsay).